The sequence spans 785 residues: (+)-copalyl diphosphate synthase 3, chloroplastic (785 aa).

Lys-238 contributes to the substrate binding site. Residues Asp-371 and Asp-373 each contribute to the Mg(2+) site. Residues 371-374 (DIDD) carry the DXDD motif motif. Lys-457 is a binding site for substrate.

Belongs to the terpene synthase family. Requires Mg(2+) as cofactor. Present in both leaves and flowers, with higher levels in leaves.

It localises to the plastid. The protein localises to the chloroplast. The catalysed reaction is (2E,6E,10E)-geranylgeranyl diphosphate = (+)-copalyl diphosphate. It participates in secondary metabolite biosynthesis; terpenoid biosynthesis. Involved in the biosynthesis of labdane-type diterpenoid including marrubiin and other labdane-related furanoid diterpenoids with potential applications as anti-diabetics, analgesics or vasorelaxants. Terpene synthase that produces (+)-copalyl diphosphate ((+)-CPP) from geranylgeranyl diphosphate (GGPP). This is (+)-copalyl diphosphate synthase 3, chloroplastic from Marrubium vulgare (White horehound).